We begin with the raw amino-acid sequence, 222 residues long: Pleckstrin homology domain-containing family B member 2 (222 aa).

Positions 2 to 109 (AFVKSGWLLR…WKFTLQDSRT (108 aa)) constitute a PH domain. Lys20 contacts a 1,2-diacyl-sn-glycero-3-phospho-L-serine.

It is found in the recycling endosome membrane. Functionally, involved in retrograde transport of recycling endosomes. The chain is Pleckstrin homology domain-containing family B member 2 (PLEKHB2) from Homo sapiens (Human).